Consider the following 368-residue polypeptide: tRNA 2-selenouridine synthase (368 aa).

Positions 15–138 (FLNQHPIMDV…LRQYLIGVIE (124 aa)) constitute a Rhodanese domain. Cys-98 acts as the S-selanylcysteine intermediate in catalysis.

It belongs to the SelU family. As to quaternary structure, monomer.

The catalysed reaction is 5-methylaminomethyl-2-thiouridine(34) in tRNA + selenophosphate + (2E)-geranyl diphosphate + H2O + H(+) = 5-methylaminomethyl-2-selenouridine(34) in tRNA + (2E)-thiogeraniol + phosphate + diphosphate. It carries out the reaction 5-methylaminomethyl-2-thiouridine(34) in tRNA + (2E)-geranyl diphosphate = 5-methylaminomethyl-S-(2E)-geranyl-thiouridine(34) in tRNA + diphosphate. The enzyme catalyses 5-methylaminomethyl-S-(2E)-geranyl-thiouridine(34) in tRNA + selenophosphate + H(+) = 5-methylaminomethyl-2-(Se-phospho)selenouridine(34) in tRNA + (2E)-thiogeraniol. It catalyses the reaction 5-methylaminomethyl-2-(Se-phospho)selenouridine(34) in tRNA + H2O = 5-methylaminomethyl-2-selenouridine(34) in tRNA + phosphate. In terms of biological role, involved in the post-transcriptional modification of the uridine at the wobble position (U34) of tRNA(Lys), tRNA(Glu) and tRNA(Gln). Catalyzes the conversion of 2-thiouridine (S2U-RNA) to 2-selenouridine (Se2U-RNA). Acts in a two-step process involving geranylation of 2-thiouridine (S2U) to S-geranyl-2-thiouridine (geS2U) and subsequent selenation of the latter derivative to 2-selenouridine (Se2U) in the tRNA chain. The protein is tRNA 2-selenouridine synthase of Shewanella baltica (strain OS223).